We begin with the raw amino-acid sequence, 91 residues long: Non-specific lipid-transfer protein 1 (91 aa).

Disulfide bonds link Cys-4–Cys-51, Cys-14–Cys-28, Cys-29–Cys-74, and Cys-49–Cys-88.

Belongs to the plant LTP family. In terms of tissue distribution, detected in seeds (at protein level).

Plant non-specific lipid-transfer proteins transfer phospholipids as well as galactolipids across membranes. May play a role in wax or cutin deposition in the cell walls of expanding epidermal cells and certain secretory tissues. This Carum carvi (Caraway) protein is Non-specific lipid-transfer protein 1.